The chain runs to 337 residues: Inositol 2-dehydrogenase (337 aa).

It belongs to the Gfo/Idh/MocA family. As to quaternary structure, homotetramer.

It catalyses the reaction myo-inositol + NAD(+) = scyllo-inosose + NADH + H(+). Involved in the oxidation of myo-inositol (MI) to 2-keto-myo-inositol (2KMI or 2-inosose). This chain is Inositol 2-dehydrogenase, found in Burkholderia multivorans (strain ATCC 17616 / 249).